The chain runs to 383 residues: tRNA-specific 2-thiouridylase MnmA (383 aa).

Residues 9–16 and Met-35 contribute to the ATP site; that span reads GMSGGVDS. An interaction with target base in tRNA region spans residues 95–97; the sequence is NPD. Residue Cys-100 is the Nucleophile of the active site. An intrachain disulfide couples Cys-100 to Cys-198. Residue Gly-124 participates in ATP binding. Residues 148-150 form an interaction with tRNA region; the sequence is KDQ. Residue Cys-198 is the Cysteine persulfide intermediate of the active site. An interaction with tRNA region spans residues 310–311; sequence RY.

Belongs to the MnmA/TRMU family.

Its subcellular location is the cytoplasm. The catalysed reaction is S-sulfanyl-L-cysteinyl-[protein] + uridine(34) in tRNA + AH2 + ATP = 2-thiouridine(34) in tRNA + L-cysteinyl-[protein] + A + AMP + diphosphate + H(+). In terms of biological role, catalyzes the 2-thiolation of uridine at the wobble position (U34) of tRNA, leading to the formation of s(2)U34. This Paraburkholderia phytofirmans (strain DSM 17436 / LMG 22146 / PsJN) (Burkholderia phytofirmans) protein is tRNA-specific 2-thiouridylase MnmA.